The following is a 514-amino-acid chain: Regulatory protein E2 (514 aa).

The segment at 1–201 (MENLSERFNA…ETVFAPVTSS (201 aa)) is transactivation domain. Residues 197–424 (PVTSSTPPGS…SKHTGRLGRL (228 aa)) are disordered. Residues 199 to 231 (TSSTPPGSPGGQADTNTTPATPTTSTTAVDSTS) show a composition bias toward low complexity. Over residues 232 to 244 (RQLTTSKQPQQTE) the composition is skewed to polar residues. Basic residues predominate over residues 248–284 (RRYGRRPSSKSRRSQTQQRRSRSRHRSRSRSRSRSKS). Over residues 285–321 (QTHTTRSTTRSRSTSLTKTRALTSRSRSRGRSPTTCR) the composition is skewed to low complexity. Positions 323-333 (GGGRSPRRRSR) are enriched in basic residues. Residues 334–346 (SPSTSSSCTTQRS) show a composition bias toward low complexity. Residues 430–514 (DPPVIIVKGA…DKAYGNLDSL (85 aa)) are DNA-binding domain. K437 is covalently cross-linked (Glycyl lysine isopeptide (Lys-Gly) (interchain with G-Cter in SUMO)).

The protein belongs to the papillomaviridae E2 protein family. In terms of assembly, binds DNA as homodimer. Interacts with protein E1; this interaction greatly increases E1 DNA-binding activity. Interacts with protein L1; this interaction enhances E2-dependent replication and transcription activation. Interacts with protein L2; this interaction inhibits E2 transcriptional activity but not DNA replication function E2. Interacts with protein E7; this interaction inhibits E7 oncogenic activity. Interacts with host TAF1; this interaction modulates E2-dependent transcriptional regulation. Interacts with host BRD4; this interaction mediates E2 transcriptional activation function. Additionally, the interaction with host BRD4 on mitotic chromosomes mediates tethering of the viral genome. Interacts with host TOPBP1; this interaction is required for optimal viral DNA replication. Post-translationally, phosphorylated. In terms of processing, sumoylation plays a regulatory role in E2 transcriptional activity.

The protein localises to the host nucleus. Its function is as follows. Plays a role in the initiation of viral DNA replication. A dimer of E2 interacts with a dimer of E1 in order to improve specificity of E1 DNA binding activity. Once the complex recognizes and binds DNA at specific sites, the E2 dimer is removed from DNA. E2 also regulates viral transcription through binding to the E2RE response element (5'-ACCNNNNNNGGT-3') present in multiple copies in the regulatory regions of the viral genome. Activates or represses transcription depending on E2RE's position with regards to proximal promoter elements including the TATA-box. Repression occurs by sterically hindering the assembly of the transcription initiation complex. In Homo sapiens (Human), this protein is Regulatory protein E2.